A 431-amino-acid chain; its full sequence is Arginine biosynthesis bifunctional protein ArgJ, mitochondrial (431 aa).

Residues T174, K200, T211, E297, N426, and T431 each coordinate substrate. Catalysis depends on T211, which acts as the Nucleophile.

Belongs to the ArgJ family. Heterodimer of an alpha and a beta chain. Post-translationally, the alpha and beta chains are autoproteolytically processed from a single precursor protein within the mitochondrion.

It localises to the mitochondrion matrix. It carries out the reaction N(2)-acetyl-L-ornithine + L-glutamate = N-acetyl-L-glutamate + L-ornithine. It catalyses the reaction L-glutamate + acetyl-CoA = N-acetyl-L-glutamate + CoA + H(+). The protein operates within amino-acid biosynthesis; L-arginine biosynthesis; L-ornithine and N-acetyl-L-glutamate from L-glutamate and N(2)-acetyl-L-ornithine (cyclic): step 1/1. Its pathway is amino-acid biosynthesis; L-arginine biosynthesis; N(2)-acetyl-L-ornithine from L-glutamate: step 1/4. In terms of biological role, catalyzes two activities which are involved in the cyclic version of arginine biosynthesis: the synthesis of acetylglutamate from glutamate and acetyl-CoA, and of ornithine by transacetylation between acetylornithine and glutamate. This Yarrowia lipolytica (strain CLIB 122 / E 150) (Yeast) protein is Arginine biosynthesis bifunctional protein ArgJ, mitochondrial.